We begin with the raw amino-acid sequence, 76 residues long: Centromere protein W (76 aa).

It belongs to the CENP-W/WIP1 family. Heterodimer with CENPT; this dimer coassembles with CENPS-CENPX heterodimers at centromeres to form the tetrameric CENP-T-W-S-X complex, which is a subcomplex of the large constitutive centromere-associated network (CCAN, also known as the interphase centromere complex or ICEN). Interacts with NPM1.

Its subcellular location is the nucleus. The protein localises to the chromosome. It is found in the centromere. It localises to the kinetochore. Functionally, component of the CENPA-NAC (nucleosome-associated) complex, a complex that plays a central role in assembly of kinetochore proteins, mitotic progression and chromosome segregation. The CENPA-NAC complex recruits the CENPA-CAD (nucleosome distal) complex and may be involved in incorporation of newly synthesized CENPA into centromeres. Part of a nucleosome-associated complex that binds specifically to histone H3-containing nucleosomes at the centromere, as opposed to nucleosomes containing CENPA. Component of the heterotetrameric CENP-T-W-S-X complex that binds and supercoils DNA, and plays an important role in kinetochore assembly. CENPW has a fundamental role in kinetochore assembly and function. It is one of the inner kinetochore proteins, with most further proteins binding downstream. Required for normal chromosome organization and normal progress through mitosis. This is Centromere protein W (CENPW) from Gallus gallus (Chicken).